The sequence spans 188 residues: MSVAAGDKPTNSRQEILEGARRCFAEHGYEGATVRRLEEATGKSRGAIFHHFGDKENLFLALAREDAARMAEVVSENGLVEVMRGMLEDPERYDWMSVRLEISKQLRTDPVFRAKWIDHQSVLDEAVRVRLSRNVDKGQMRTDVPIEVLHTFLETVLDGFISRLATGASTEGLSEVLDLVEGTVRKRD.

The region spanning T10 to M70 is the HTH tetR-type domain. Positions T33–F52 form a DNA-binding region, H-T-H motif. Citrate is bound by residues L79–V80, R130, and N134. Position 181 (E181) interacts with Mg(2+). Citrate is bound at residue R185.

In terms of assembly, homodimer.

Functionally, acnR negatively controls the expression of the aconitase gene acn. Binds to the imperfect inverted repeat in the acn promoter region. The protein is HTH-type transcriptional repressor AcnR of Corynebacterium glutamicum (strain ATCC 13032 / DSM 20300 / JCM 1318 / BCRC 11384 / CCUG 27702 / LMG 3730 / NBRC 12168 / NCIMB 10025 / NRRL B-2784 / 534).